The following is a 251-amino-acid chain: Phosphomannomutase (251 aa).

Asp-18 acts as the Nucleophile in catalysis. 2 residues coordinate Mg(2+): Asp-18 and Asp-20. Asp-20 functions as the Proton donor/acceptor in the catalytic mechanism. Positions 27, 129, 140, 147, 185, and 187 each coordinate alpha-D-mannose 1-phosphate. 4 residues coordinate Mg(2+): Asp-213, Phe-225, Asp-227, and Thr-230.

The protein belongs to the eukaryotic PMM family. Homodimer. Mg(2+) is required as a cofactor.

Its subcellular location is the cytoplasm. The enzyme catalyses alpha-D-mannose 1-phosphate = D-mannose 6-phosphate. The protein operates within nucleotide-sugar biosynthesis; GDP-alpha-D-mannose biosynthesis; alpha-D-mannose 1-phosphate from D-fructose 6-phosphate: step 2/2. In terms of biological role, catalyzes the interconversion of mannose-6-phosphate to mannose-1-phosphate, the precursor for the synthesis of GDP-mannose. GDP-mannose is an essential sugar nucleotide for the synthesis of D-mannose-containing cell wall polysaccharides (galactomannans and glucomannans), glycolipids, glycoproteins and the antioxidant L-ascorbate. This chain is Phosphomannomutase, found in Galdieria sulphuraria (Red alga).